The sequence spans 202 residues: CASP-like protein 1E1 (202 aa).

At 1–33 (MESQCRPNVDGVHNGVESHVKVVEKPRSVGSSS) the chain is on the cytoplasmic side. A helical transmembrane segment spans residues 34–54 (EFVLRILGLLLTLIAAVVAGV). Residues 55 to 85 (DKQTKIIPLTLIKTLPSLHVPVTAKWSDMSA) lie on the Extracellular side of the membrane. Residues 86–106 (FVYLVVSNAIACSYAAISLVL) form a helical membrane-spanning segment. Residues 107-118 (VTMLGRRGKGGR) are Cytoplasmic-facing. The chain crosses the membrane as a helical span at residues 119–139 (VLAVIVLDLHMVGLLFSANGA). Residues 140–172 (ATAVGVLGQYGNSHVEWKKVCNVFDSFCHHLVA) lie on the Extracellular side of the membrane. The chain crosses the membrane as a helical span at residues 173–193 (SLALSFLGSLSFLGLVLLAIL). The Cytoplasmic portion of the chain corresponds to 194–202 (NLHKKSSTK).

Belongs to the Casparian strip membrane proteins (CASP) family. As to quaternary structure, homodimer and heterodimers.

The protein resides in the cell membrane. The sequence is that of CASP-like protein 1E1 from Vitis vinifera (Grape).